We begin with the raw amino-acid sequence, 480 residues long: Thiamine biosynthesis bifunctional protein ThiM/ThiE (480 aa).

Residues 1-287 (MSTLPERVRE…LYVLVSGATP (287 aa)) form a hydroxyethylthiazole kinase region. Position 40 (Met40) interacts with 5-(2-hydroxyethyl)-4-methylthiazole. ATP-binding residues include Arg116 and Thr164. Gly191 contributes to the 5-(2-hydroxyethyl)-4-methylthiazole binding site. Positions 288-480 (PDVLEAVLQA…VRRAKGEVSA (193 aa)) are thiamine-phosphate synthase. Residues 303–307 (QFREK) and Asn335 each bind 4-amino-2-methyl-5-(diphosphooxymethyl)pyrimidine. The Mg(2+) site is built by Asp336 and Asp355. Thr374 contacts 4-amino-2-methyl-5-(diphosphooxymethyl)pyrimidine. 2-[(2R,5Z)-2-carboxy-4-methylthiazol-5(2H)-ylidene]ethyl phosphate is bound at residue 400-402 (TPS). Lys403 is a binding site for 4-amino-2-methyl-5-(diphosphooxymethyl)pyrimidine. 2-[(2R,5Z)-2-carboxy-4-methylthiazol-5(2H)-ylidene]ethyl phosphate-binding positions include Gly431 and 451–452 (IS).

In the N-terminal section; belongs to the Thz kinase family. This sequence in the C-terminal section; belongs to the thiamine-phosphate synthase family. The cofactor is Mg(2+).

The enzyme catalyses 5-(2-hydroxyethyl)-4-methylthiazole + ATP = 4-methyl-5-(2-phosphooxyethyl)-thiazole + ADP + H(+). It carries out the reaction 2-[(2R,5Z)-2-carboxy-4-methylthiazol-5(2H)-ylidene]ethyl phosphate + 4-amino-2-methyl-5-(diphosphooxymethyl)pyrimidine + 2 H(+) = thiamine phosphate + CO2 + diphosphate. The catalysed reaction is 2-(2-carboxy-4-methylthiazol-5-yl)ethyl phosphate + 4-amino-2-methyl-5-(diphosphooxymethyl)pyrimidine + 2 H(+) = thiamine phosphate + CO2 + diphosphate. It catalyses the reaction 4-methyl-5-(2-phosphooxyethyl)-thiazole + 4-amino-2-methyl-5-(diphosphooxymethyl)pyrimidine + H(+) = thiamine phosphate + diphosphate. Its pathway is cofactor biosynthesis; thiamine diphosphate biosynthesis; 4-methyl-5-(2-phosphoethyl)-thiazole from 5-(2-hydroxyethyl)-4-methylthiazole: step 1/1. It functions in the pathway cofactor biosynthesis; thiamine diphosphate biosynthesis; thiamine phosphate from 4-amino-2-methyl-5-diphosphomethylpyrimidine and 4-methyl-5-(2-phosphoethyl)-thiazole: step 1/1. Its function is as follows. Condenses 4-methyl-5-(beta-hydroxyethyl)thiazole monophosphate (THZ-P) and 2-methyl-4-amino-5-hydroxymethyl pyrimidine pyrophosphate (HMP-PP) to form thiamine monophosphate (TMP). The sequence is that of Thiamine biosynthesis bifunctional protein ThiM/ThiE (thiM/thiE) from Symbiobacterium thermophilum (strain DSM 24528 / JCM 14929 / IAM 14863 / T).